A 336-amino-acid chain; its full sequence is Abasic site processing protein HMCES (336 aa).

C2 (nucleophile) is an active-site residue. C2 carries the thiazolidine linkage to a ring-opened DNA abasic site modification. Residues 26–51 form a disordered region; sequence RQKCPKWRDGDTDKYQPSYNKSPQSN. Residues 40-51 show a composition bias toward polar residues; that stretch reads YQPSYNKSPQSN. The active site involves E129. The tract at residues 285–336 is disordered; sequence QNKSPKKEESRSIIQSPKLSQFGAPPKKTSAGLMQQWLKKEDGEPSPKRAKK. Positions 322 to 336 are enriched in basic and acidic residues; the sequence is LKKEDGEPSPKRAKK.

It belongs to the SOS response-associated peptidase family. In terms of processing, ubiquitination of the hmces DNA-protein cross-link by rfwd3 may promotes its degradation.

Its subcellular location is the chromosome. Formation and reversal of DNA-protein cross-link depends on DNA context. Catalyzes formation of the thiazolidine linkage in presence of abasic sites in single-stranded DNA. Mediates the reversal of the thiazolidine cross-link in presence of double stranded DNA. Its function is as follows. Sensor of abasic sites in single-stranded DNA (ssDNA) required to preserve genome integrity by promoting error-free repair of abasic sites. Acts as an enzyme that recognizes and binds abasic sites in ssDNA at replication forks and chemically modifies the lesion by forming a covalent cross-link with DNA: forms a stable thiazolidine linkage between a ring-opened abasic site and the alpha-amino and sulfhydryl substituents of its N-terminal catalytic cysteine residue. The hmces DNA-protein cross-link is then either reversed or degraded. Hmces is able to catalyze the reversal of its thiazolidine cross-link and cycle between a cross-link and a non-cross-linked state depending on DNA context: mediates self-reversal of the thiazolidine cross-link in double stranded DNA, allowing apex1 to initiate downstream repair of abasic sites. The hmces DNA-protein cross-link can also be degraded by the sprtn metalloprotease following unfolding by the brip1/fancj helicase. Promotes error-free repair of abasic sites by protecting abasic sites from translesion synthesis (TLS) polymerases and endonucleases that are error-prone and would generate mutations and double-strand breaks. Acts as a protease: mediates autocatalytic processing of its N-terminal methionine in order to expose the catalytic cysteine. The HMCES DNA-protein cross-link is then either reversed or degraded. According to a model, the HMCES DNA-protein cross-link. This Xenopus laevis (African clawed frog) protein is Abasic site processing protein HMCES.